A 329-amino-acid polypeptide reads, in one-letter code: MSHSYNVRPLVSGAPHVSLVTASTSDASIDEFFSHHPIDEILSEKGALLFRGFSINEDQQFSQLVSILAKEELTYQERSTQRKKTAQGVYTSTEYPAAKTIANHSENAFQQVVPGKILFYAHQAALKGGETPIADNSRVLSLIDEEIVAEFRQKGIRYLRNFDGGFDLSWQEAFQTEKKREVETYCVKNAIDCEWLSDSHLRTSQLRSATRRHPLNRKEMWFNQLHLFHITNLELPVRQALLASLGHDLLPRHAVYGTGEEIPDEVVDHIRAALVKAELVFPWQTGDVLIADNILVSHGRKPFEGERAVRVALIDPVYPSAEENPHAQR.

The cofactor is Fe(2+).

It functions in the pathway antibiotic biosynthesis. Involved in dapdiamide antibiotics biosynthesis. Catalyzes the alpha-ketoglutarate-dependent epoxidation of the covalently bound N-beta-fumaramoyl-DAP-S-DdaD to generate N-beta-epoxysuccinamoyl-DAP in thioester linkage to DdaD. The polypeptide is Dapdiamide synthesis protein DdaC (Enterobacter agglomerans (Erwinia herbicola)).